A 132-amino-acid polypeptide reads, in one-letter code: Histone H2A.1 (132 aa).

Ser-2 is subject to N-acetylserine. N6-acetyllysine is present on residues Lys-5 and Lys-8. Lys-14 and Lys-22 each carry N6-succinyllysine. At Gln-106 the chain carries N5-methylglutamine. Lys-120 carries the post-translational modification N6-malonyllysine; alternate. Residue Lys-127 forms a Glycyl lysine isopeptide (Lys-Gly) (interchain with G-Cter in SUMO) linkage. A Phosphoserine modification is found at Ser-129. The [ST]-Q motif signature appears at 129 to 130 (SQ).

The protein belongs to the histone H2A family. As to quaternary structure, the nucleosome is a histone octamer containing two molecules each of H2A, H2B, H3 and H4 assembled in one H3-H4 heterotetramer and two H2A-H2B heterodimers. The octamer wraps approximately 147 bp of DNA. Post-translationally, phosphorylated to form H2AS128ph (gamma-H2A) in response to DNA double-strand breaks (DSBs) generated by exogenous genotoxic agents and by stalled replication forks. Phosphorylation is dependent on the DNA damage checkpoint kinases MEC1/ATR and TEL1/ATM, spreads on either side of a detected DSB site and may mark the surrounding chromatin for recruitment of proteins required for DNA damage signaling and repair. Gamma-H2A interacts with ARP4, a shared component of the NuA4 histone acetyltransferase complex and the INO80 and SWR1 chromatin remodeling complexes, and serves to recruit first NuA4, mediating histone H4 acetylation, and subsequently the INO80/SWR1 complexes, facilitating DNA resection, to DSB sites. Gamma-H2A is required for sequestering cohesin around the break site, which is important for efficient post-replicative double-strand break repair by homologous recombination, holding the damaged chromatid close to its undamaged sister template. Gamma-H2A is removed from the DNA prior to the strand invasion-primer extension step of the repair process and subsequently dephosphorylated by PPH3, a component of the histone H2A phosphatase complex (HTP-C). Dephosphorylation is necessary for efficient recovery from the DNA damage checkpoint. In terms of processing, N-acetylated by NAT4. Acetylated by ESA1, a component of the NuA4 histone acetyltransferase (HAT) complex, to form H2AK4ac and H2AK7ac. Post-translationally, glutamine methylation at Gln-106 (H2AQ105me) by NOP1 is specifically dedicated to polymerase I. It is present at 35S ribosomal DNA locus and impairs binding of the FACT complex. In terms of processing, sumoylated to from H2AK126su. May lead to transcriptional repression.

Its subcellular location is the nucleus. The protein localises to the chromosome. In terms of biological role, core component of nucleosome which plays a central role in DNA double strand break (DSB) repair. Nucleosomes wrap and compact DNA into chromatin, limiting DNA accessibility to the cellular machineries which require DNA as a template. Histones thereby play a central role in transcription regulation, DNA repair, DNA replication and chromosomal stability. DNA accessibility is regulated via a complex set of post-translational modifications of histones, also called histone code, and nucleosome remodeling. The protein is Histone H2A.1 (HTA1) of Saccharomyces cerevisiae (strain ATCC 204508 / S288c) (Baker's yeast).